Here is a 251-residue protein sequence, read N- to C-terminus: MRTPIIAGNWKMNMNPEQTAEFVKAVKDNLPAASEVEAVIAAPAVDLPALLENAKGSDLKVAAENCYFEDEGAFTGETSPKVLKEMGVDYVVIGHSERRDYFHETDEDINKKAHAIFRNGLTPIICCGESLETREAGKAEEWVANQVTAALKDLSAEQVASLVIAYEPIWAIGTGKTATADQAEEICAVVRKTVADLYDETVADKVRVQYGGSVKPANVKELMAKENIDGGLVGGASLVPDSYLQLVNYKN.

Residue 9–11 (NWK) coordinates substrate. Residue His95 is the Electrophile of the active site. The active-site Proton acceptor is Glu167. Substrate is bound by residues Gly173, Ser213, and 234–235 (GG).

Belongs to the triosephosphate isomerase family. Homodimer.

It localises to the cytoplasm. It carries out the reaction D-glyceraldehyde 3-phosphate = dihydroxyacetone phosphate. The protein operates within carbohydrate biosynthesis; gluconeogenesis. Its pathway is carbohydrate degradation; glycolysis; D-glyceraldehyde 3-phosphate from glycerone phosphate: step 1/1. Involved in the gluconeogenesis. Catalyzes stereospecifically the conversion of dihydroxyacetone phosphate (DHAP) to D-glyceraldehyde-3-phosphate (G3P). In Ligilactobacillus salivarius (strain UCC118) (Lactobacillus salivarius), this protein is Triosephosphate isomerase.